Reading from the N-terminus, the 295-residue chain is Fructose-bisphosphate aldolase class 1 (295 aa).

The active-site Proton acceptor is the E176. K213 functions as the Schiff-base intermediate with dihydroxyacetone-P in the catalytic mechanism.

The protein belongs to the class I fructose-bisphosphate aldolase family.

It catalyses the reaction beta-D-fructose 1,6-bisphosphate = D-glyceraldehyde 3-phosphate + dihydroxyacetone phosphate. It functions in the pathway carbohydrate degradation; glycolysis; D-glyceraldehyde 3-phosphate and glycerone phosphate from D-glucose: step 4/4. This Clostridium acetobutylicum (strain ATCC 824 / DSM 792 / JCM 1419 / IAM 19013 / LMG 5710 / NBRC 13948 / NRRL B-527 / VKM B-1787 / 2291 / W) protein is Fructose-bisphosphate aldolase class 1.